Here is a 250-residue protein sequence, read N- to C-terminus: uncharacterized protein (250 aa).

Residues 4–24 (FKYLLFLVVFAVFFLTFAFFD) form a helical membrane-spanning segment.

It is found in the membrane. This is an uncharacterized protein from Methanocaldococcus jannaschii (strain ATCC 43067 / DSM 2661 / JAL-1 / JCM 10045 / NBRC 100440) (Methanococcus jannaschii).